The following is a 370-amino-acid chain: 5-hydroxytryptamine receptor 5B (370 aa).

A disordered region spans residues 1 to 36 (MEVSNLSGATPGIAFPPGPESCSDSPSSGRSMGSTP). At 1 to 48 (MEVSNLSGATPGIAFPPGPESCSDSPSSGRSMGSTPGGLILSGREPPF) the chain is on the extracellular side. Asn-5 is a glycosylation site (N-linked (GlcNAc...) asparagine). Residues 20–36 (ESCSDSPSSGRSMGSTP) show a composition bias toward low complexity. Residues 49–75 (SAFTVLVVTLLVLLIAATFLWNLLVLV) form a helical membrane-spanning segment. The Cytoplasmic segment spans residues 76-88 (TILRVRAFHRVPH). Residues 89-115 (NLVASTAVSDVLVAALVMPLSLVSELS) traverse the membrane as a helical segment. The Extracellular portion of the chain corresponds to 116-127 (AGRRWQLGRSLC). Cys-127 and Cys-205 are disulfide-bonded. A helical membrane pass occupies residues 128–150 (HVWISFDVLCCTASIWNVAAIAL). Asp-134 contributes to the serotonin binding site. Residues 151–168 (DRYWTITRHLQYTLRTRR) lie on the Cytoplasmic side of the membrane. A helical membrane pass occupies residues 169 to 189 (RASALMIAITWALSALIALAP). Residues 190 to 211 (LLFGWGEAYDARLQRCQVSQEP) lie on the Extracellular side of the membrane. Residues 212-233 (SYAVFSTCGAFYVPLAVVLFVY) traverse the membrane as a helical segment. Topologically, residues 234 to 300 (WKIYKAAKFR…QKEKRAAMMV (67 aa)) are cytoplasmic. The helical transmembrane segment at 301–325 (GILIGVFVLCWIPFFLTELVSPLCA) threads the bilayer. The Extracellular segment spans residues 326-327 (CS). A helical transmembrane segment spans residues 328 to 352 (LPPIWKSIFLWLGYSNSFFNPLIYT). Residues 353–370 (AFNKNYNNAFKSLFTKQR) are Cytoplasmic-facing.

The protein belongs to the G-protein coupled receptor 1 family. Brain; in the CA1 region of hippocampus, the medial habenula, and raphe nuclei.

Its subcellular location is the cell membrane. Its function is as follows. G-protein coupled receptor for 5-hydroxytryptamine (serotonin), a biogenic hormone that functions as a neurotransmitter, a hormone and a mitogen. Also functions as a receptor for ergot alkaloid derivatives and other psychoactive substances. Ligand binding causes a conformation change that triggers signaling via guanine nucleotide-binding proteins (G proteins) and modulates the activity of downstream effectors. Htr5b is coupled to G(i)/G(o) G alpha proteins and mediates inhibitory neurotransmission: signaling inhibits adenylate cyclase activity and activates a phosphatidylinositol-calcium second messenger system that regulates the release of Ca(2+) ions from intracellular stores. This is 5-hydroxytryptamine receptor 5B from Rattus norvegicus (Rat).